Reading from the N-terminus, the 337-residue chain is B1 bradykinin receptor (337 aa).

The Extracellular segment spans residues M1–G41. 2 N-linked (GlcNAc...) asparagine glycosylation sites follow: N13 and N21. Residues F42 to L62 form a helical membrane-spanning segment. The Cytoplasmic segment spans residues L63–E83. Residues I84 to A104 traverse the membrane as a helical segment. The Extracellular portion of the chain corresponds to E105–R121. Cysteines 120 and 199 form a disulfide. Residues V122–S142 form a helical membrane-spanning segment. Topologically, residues Q143–A164 are cytoplasmic. Residues Q165–L185 traverse the membrane as a helical segment. The Extracellular segment spans residues R186–N217. N-linked (GlcNAc...) asparagine glycosylation is present at N195. The helical transmembrane segment at V218–S238 threads the bilayer. Over L239–L261 the chain is Cytoplasmic. Residues I262–L282 form a helical membrane-spanning segment. The Extracellular segment spans residues D283–Q305. Residues L306 to G326 form a helical membrane-spanning segment. At R327–L337 the chain is on the cytoplasmic side.

This sequence belongs to the G-protein coupled receptor 1 family. Bradykinin receptor subfamily. BDKRB1 sub-subfamily. In terms of tissue distribution, expressed in bladder, lung, duodenum, kidney, uterus, thymus, salivary gland, testis, prostate, macrophages, aorta, spleen and heart.

It localises to the cell membrane. This is a receptor for bradykinin. Could be a factor in chronic pain and inflammation. The polypeptide is B1 bradykinin receptor (Bdkrb1) (Rattus norvegicus (Rat)).